A 395-amino-acid polypeptide reads, in one-letter code: MLPAVGSVDEEEDPAEEDCPELVPIETTQSEEEEKSGLGAKIPVTIITGYLGAGKTTLLNYILTEQHSKRVAVILNESGEGSALEKSLAVSQGGELYEEWLELRNGCLCCSVKDNGLRAIENLMQKKGKFDDILLETTGLADPGAVASMFWVDAELGSDIYLDGIITIVDSKYGLKHLTEEKPDGLINEATRQVALADIILINKTDLVPEEDVKKLRTTLRSINGLGQILETQRSRVDLSNVLDLHAFDSLSGISLQKKLQHVPGTQPHLDQSIVTITFDVPGNAKEEHLNMFIQNLLWEKNVRNKDNHCMEVIRLKGLVSIKDKSQQVIVQGVHELCDLEETPVSWKDDTERTNRLVLIGRNLDKDILKQLFIATVTETEKQWTTHFKEDQVCT.

The disordered stretch occupies residues 1-22; sequence MLPAVGSVDEEEDPAEEDCPEL. Over residues 8–20 the composition is skewed to acidic residues; sequence VDEEEDPAEEDCP. The short motif at 17 to 24 is the psi-PxLVp motif element; the sequence is EDCPELVP. 49–56 contributes to the GTP binding site; it reads GYLGAGKT. Cys-107, Cys-109, and Cys-110 together coordinate Zn(2+). The CXCC motif signature appears at 107–110; it reads CLCC. Residues 110–114 and 203–206 contribute to the GTP site; these read CSVKD and NKTD. The region spanning 274–377 is the CobW C-terminal domain; it reads IVTITFDVPG…ILKQLFIATV (104 aa).

Belongs to the SIMIBI class G3E GTPase family. ZNG1 subfamily.

Its subcellular location is the nucleus. It catalyses the reaction GTP + H2O = GDP + phosphate + H(+). In terms of biological role, zinc chaperone that directly transfers zinc cofactor to target metalloproteins, thereby activating them. Catalyzes zinc insertion into the active site of methionine aminopeptidase METAP1, which function to cleave the initiator methionine from polypeptides during or after protein translation. Mechanistically, the N-terminal psi-PxLVp motif binds to the C6H2-type zinc finger of inactive form of METAP1. After formation of the docked complex, zinc is transferred from the CXCC motif in the GTPase domain of ZNG1F to the zinc binding site in the peptidase domain of METAP1 in a process requiring GTP hydrolysis. GTP/GDP exchange is required for release of active METAP1. This chain is Zinc-regulated GTPase metalloprotein activator 1F, found in Homo sapiens (Human).